A 305-amino-acid chain; its full sequence is Tyrosine recombinase XerC (305 aa).

The region spanning 1-93 (MVLDGFAAHF…SWRQYCVWLV (93 aa)) is the Core-binding (CB) domain. The Tyr recombinase domain occupies 114 to 294 (RVPKALPQEW…DFDHIARLYD (181 aa)). Catalysis depends on residues Arg155, Lys179, His246, Arg249, and His272. The active-site O-(3'-phospho-DNA)-tyrosine intermediate is Tyr281.

The protein belongs to the 'phage' integrase family. XerC subfamily. As to quaternary structure, forms a cyclic heterotetrameric complex composed of two molecules of XerC and two molecules of XerD.

It localises to the cytoplasm. In terms of biological role, site-specific tyrosine recombinase, which acts by catalyzing the cutting and rejoining of the recombining DNA molecules. The XerC-XerD complex is essential to convert dimers of the bacterial chromosome into monomers to permit their segregation at cell division. It also contributes to the segregational stability of plasmids. The chain is Tyrosine recombinase XerC from Neisseria meningitidis serogroup C / serotype 2a (strain ATCC 700532 / DSM 15464 / FAM18).